The chain runs to 1941 residues: Integrin beta-like protein B (1941 aa).

An N-terminal signal peptide occupies residues 1-20; it reads MKNIIKYLFIFLCFLIITEA. The Extracellular portion of the chain corresponds to 21–1871; it reads THFRYGTISW…VTTQNSSNKT (1851 aa). In terms of domain architecture, EGF-like spans 420 to 457; the sequence is YGDKCTVLPPCKNGVPNGGVNGDGKCLCNNGWTGSDCS. 2 disulfides stabilise this stretch: cysteine 430-cysteine 445 and cysteine 447-cysteine 456. Positions 513–696 constitute a VWFA domain; it reads DVYLLVDANM…AGIKAVSSKL (184 aa). Asparagine 1400, asparagine 1505, asparagine 1530, asparagine 1606, asparagine 1652, asparagine 1738, asparagine 1777, asparagine 1848, asparagine 1866, and asparagine 1869 each carry an N-linked (GlcNAc...) asparagine glycan. A helical membrane pass occupies residues 1872 to 1892; it reads VLSGAIAGAAAGTALIAAAMW. Over 1893–1941 the chain is Cytoplasmic; sequence KMLRKAAPPTDAFFDEGAFLGDGVNSNPMYQESKNGGENPLYLASNETL. Positions 1921–1941 are disordered; that stretch reads MYQESKNGGENPLYLASNETL.

Belongs to the SIB family. Interacts with talA/talin.

The protein localises to the membrane. Functionally, implicated in cellular adhesion. This is Integrin beta-like protein B (sibB) from Dictyostelium discoideum (Social amoeba).